The chain runs to 430 residues: L-lysine N6-monooxygenase MbtG (430 aa).

Positions 1 to 21 (MTATLAVIGAGPKAVAVAAKA) are cleaved as a signal peptide.

This sequence belongs to the lysine N(6)-hydroxylase/L-ornithine N(5)-oxygenase family. Requires FAD as cofactor.

It carries out the reaction L-lysine + NADPH + O2 = N(6)-hydroxy-L-lysine + NADP(+) + H2O. It participates in siderophore biosynthesis; mycobactin biosynthesis. Its function is as follows. Flavoprotein monooxygenase required for N-hydroxylation of the two acylated lysine residues during mycobactin assembly, thus producing the hydroxamate groups necessary for iron sequestration. Is also able, but less efficiently, to hydroxylate L-lysine (non acylated) in vitro. The sequence is that of L-lysine N6-monooxygenase MbtG (mbtG) from Mycobacterium sp. (strain MCS).